The chain runs to 241 residues: tRNA (guanine-N(7)-)-methyltransferase (241 aa).

Glutamate 76, glutamate 101, aspartate 128, and aspartate 150 together coordinate S-adenosyl-L-methionine. Aspartate 150 is an active-site residue. Substrate contacts are provided by residues lysine 154, aspartate 186, and threonine 219–glutamate 222.

The protein belongs to the class I-like SAM-binding methyltransferase superfamily. TrmB family.

It catalyses the reaction guanosine(46) in tRNA + S-adenosyl-L-methionine = N(7)-methylguanosine(46) in tRNA + S-adenosyl-L-homocysteine. The protein operates within tRNA modification; N(7)-methylguanine-tRNA biosynthesis. Catalyzes the formation of N(7)-methylguanine at position 46 (m7G46) in tRNA. The protein is tRNA (guanine-N(7)-)-methyltransferase of Cereibacter sphaeroides (strain ATCC 17023 / DSM 158 / JCM 6121 / CCUG 31486 / LMG 2827 / NBRC 12203 / NCIMB 8253 / ATH 2.4.1.) (Rhodobacter sphaeroides).